The following is a 950-amino-acid chain: Oxysterol-binding protein-related protein 1 (950 aa).

The tract at residues 1 to 237 (MNTEAEQQLL…NKVIYKALKR (237 aa)) is interaction with RAB7A. ANK repeat units lie at residues 47-76 (LGWT…EVNV), 80-109 (MGDT…DTTI), and 175-204 (LGNT…DPNL). Residues 235–334 (LKRYEGPLWK…WLEAIEEHSA (100 aa)) enclose the PH domain. Residues 430–463 (NFKLEQEQEKNKILSEALETLATEHHELEQSLVK) are a coiled coil. An FFAT motif is present at residues 469-485 (SILSEDEFYDALSDSES). Residue Ser499 is modified to Phosphoserine. Residues 501–521 (EEEGEHLGSRKHRMSEEKDCG) are compositionally biased toward basic and acidic residues. 3 disordered regions span residues 501–527 (EEEG…DALS), 795–816 (KKNT…LDEM), and 881–913 (MENG…SEED). A coiled-coil region spans residues 877–913 (DIRAMENGEIDQASEEKKRLEEKQRAARKNRSKSEED). The span at 890–901 (SEEKKRLEEKQR) shows a compositional bias: basic and acidic residues.

Belongs to the OSBP family. In terms of assembly, interacts (via FFAT motif) with VAPA and VAPB. Interacts with the GTP-bound form of RAB7A. Interacts with OAS1B. Interacts (via FFAT motif) with MOSPD2 (via MSP domain).

It localises to the late endosome. In terms of biological role, binds phospholipids; exhibits strong binding to phosphatidic acid and weak binding to phosphatidylinositol 3-phosphate. Stabilizes GTP-bound RAB7A on late endosomes/lysosomes and alters functional properties of late endocytic compartments via its interaction with RAB7A. Binds 25-hydroxycholesterol and cholesterol. This Homo sapiens (Human) protein is Oxysterol-binding protein-related protein 1.